The following is a 169-amino-acid chain: Ecotin (169 aa).

A signal peptide spans 1 to 21 (MKKCSIILASVLLATSINAIA). Residues Cys76 and Cys113 are joined by a disulfide bond.

The protein belongs to the protease inhibitor I11 (ecotin) family. Homodimer.

The protein resides in the periplasm. Its function is as follows. General inhibitor of pancreatic serine proteases: inhibits chymotrypsin, trypsin, elastases, factor X, kallikrein as well as a variety of other proteases. The polypeptide is Ecotin (Yersinia pseudotuberculosis serotype O:1b (strain IP 31758)).